We begin with the raw amino-acid sequence, 662 residues long: Biosynthetic arginine decarboxylase (662 aa).

At Lys126 the chain carries N6-(pyridoxal phosphate)lysine. Residue 308–318 (LNVGGGLGVDY) participates in substrate binding.

This sequence belongs to the Orn/Lys/Arg decarboxylase class-II family. SpeA subfamily. The cofactor is Mg(2+). Pyridoxal 5'-phosphate is required as a cofactor.

It catalyses the reaction L-arginine + H(+) = agmatine + CO2. Functionally, catalyzes the biosynthesis of agmatine from arginine. The sequence is that of Biosynthetic arginine decarboxylase from Deinococcus radiodurans (strain ATCC 13939 / DSM 20539 / JCM 16871 / CCUG 27074 / LMG 4051 / NBRC 15346 / NCIMB 9279 / VKM B-1422 / R1).